We begin with the raw amino-acid sequence, 282 residues long: Energy-coupling factor transporter ATP-binding protein EcfA2 (282 aa).

The ABC transporter domain maps to 1–234 (MKGSPFEKVA…ADELVALGLD (234 aa)). Residue 28–35 (GHTGSGKS) participates in ATP binding.

It belongs to the ABC transporter superfamily. Energy-coupling factor EcfA family. As to quaternary structure, forms a stable energy-coupling factor (ECF) transporter complex composed of 2 membrane-embedded substrate-binding proteins (S component), 2 ATP-binding proteins (A component) and 2 transmembrane proteins (T component).

The protein localises to the cell membrane. Its function is as follows. ATP-binding (A) component of a common energy-coupling factor (ECF) ABC-transporter complex. Unlike classic ABC transporters this ECF transporter provides the energy necessary to transport a number of different substrates. The protein is Energy-coupling factor transporter ATP-binding protein EcfA2 of Halalkalibacterium halodurans (strain ATCC BAA-125 / DSM 18197 / FERM 7344 / JCM 9153 / C-125) (Bacillus halodurans).